Here is a 90-residue protein sequence, read N- to C-terminus: MNEIKNQIITEKTIRLLQKNQYTFNVDSKLTKTKIKDWIERFFDVKVKSINSLRSPRKKSQKRLPQTSLNDKRMIITLKPEYSIPLFINE.

This sequence belongs to the universal ribosomal protein uL23 family. In terms of assembly, part of the 50S ribosomal subunit.

The protein resides in the plastid. It is found in the chloroplast. Binds to 23S rRNA. This Psilotum nudum (Whisk fern) protein is Large ribosomal subunit protein uL23c (rpl23).